The chain runs to 534 residues: Probable alkaline/neutral invertase D (534 aa).

2 positions are modified to phosphoserine: Ser7 and Ser37. Residue Thr55 is modified to Phosphothreonine. Ser532 carries the phosphoserine modification.

This sequence belongs to the glycosyl hydrolase 100 family.

The catalysed reaction is Hydrolysis of terminal non-reducing beta-D-fructofuranoside residues in beta-D-fructofuranosides.. Invertase that cleaves sucrose into glucose and fructose. The chain is Probable alkaline/neutral invertase D from Arabidopsis thaliana (Mouse-ear cress).